We begin with the raw amino-acid sequence, 160 residues long: Putative pre-16S rRNA nuclease (160 aa).

This sequence belongs to the YqgF nuclease family.

The protein resides in the cytoplasm. In terms of biological role, could be a nuclease involved in processing of the 5'-end of pre-16S rRNA. In Rhodopseudomonas palustris (strain BisB5), this protein is Putative pre-16S rRNA nuclease.